Here is a 278-residue protein sequence, read N- to C-terminus: NAD-capped RNA hydrolase NudC (278 aa).

R84 is a substrate binding site. The Zn(2+) site is built by C114 and C117. Position 127 (E127) interacts with substrate. C132 is a binding site for Zn(2+). Y140 lines the substrate pocket. The 124-residue stretch at 141 to 264 (PRISPSMIVL…SIARYLIEAY (124 aa)) folds into the Nudix hydrolase domain. 3 residues coordinate a divalent metal cation: A174, E190, and E194. A Nudix box motif is present at residues 175 to 196 (GFVEPGESAEDCVHREVMEEVQ). 208 to 215 (QCWPFPHS) contributes to the substrate binding site. E235 contributes to the a divalent metal cation binding site. Position 257 (A257) interacts with substrate.

It belongs to the Nudix hydrolase family. NudC subfamily. Homodimer. It depends on Mg(2+) as a cofactor. Mn(2+) serves as cofactor. Requires Zn(2+) as cofactor.

It carries out the reaction a 5'-end NAD(+)-phospho-ribonucleoside in mRNA + H2O = a 5'-end phospho-adenosine-phospho-ribonucleoside in mRNA + beta-nicotinamide D-ribonucleotide + 2 H(+). The catalysed reaction is NAD(+) + H2O = beta-nicotinamide D-ribonucleotide + AMP + 2 H(+). The enzyme catalyses NADH + H2O = reduced beta-nicotinamide D-ribonucleotide + AMP + 2 H(+). MRNA decapping enzyme that specifically removes the nicotinamide adenine dinucleotide (NAD) cap from a subset of mRNAs by hydrolyzing the diphosphate linkage to produce nicotinamide mononucleotide (NMN) and 5' monophosphate mRNA. The NAD-cap is present at the 5'-end of some mRNAs and stabilizes RNA against 5'-processing. Has preference for mRNAs with a 5'-end purine. Catalyzes the hydrolysis of a broad range of dinucleotide pyrophosphates. The sequence is that of NAD-capped RNA hydrolase NudC from Pseudomonas syringae pv. syringae (strain B728a).